The sequence spans 382 residues: uncharacterized protein (382 aa).

The next 12 helical transmembrane spans lie at 14-34, 45-65, 75-95, 102-122, 131-151, 157-177, 204-224, 235-255, 265-284, 289-311, 325-345, and 349-369; these read GLLL…LWLA, MVSS…GYLI, YLAS…VGFW, FIAG…LMCS, LLAA…LLVS, LLHV…PLLF, LGVN…GLMP, ASIG…QWPV, LLVL…VMLT, APAL…AWAC, ALLL…AMLM, and SDNL…LMLL.

Belongs to the major facilitator superfamily. YcaD (TC 2.A.1.26) family.

The protein localises to the cell inner membrane. This is an uncharacterized protein from Salmonella arizonae (strain ATCC BAA-731 / CDC346-86 / RSK2980).